The chain runs to 499 residues: MRPLLEMRGITKRFPGVVALDGVDFELLPGEVHVLLGENGAGKSTLIKILSGAYRPDGGEILMDGRPVEIRSAAEARRLGISTIYQEFNLVPQLTVAENIHLGRQPRRFGVVDRGAMERAARELLERLGIRVDPRARVADLGVARRQMVEIAKALGLRARVLIMDEPTAALSEREVRQLFRIVRRLKEEGVGVVFISHHLEEVAEIGERVTVLRDGRLVGRVSADAGRDELVRMMVGRSIEEQFPRRRTEPGEVLLEVRGLGRRGVLRDVSLRVRAGEIVGVAGLVGAGRTELARAIFGLDPADSGEVLVEGRPLEAPGPQEARRRGVGFVTEDRQGQGIVPPLSVAENLALASLERYLRGRVLVDRGRLLRRAREIVQSLRIRTPSLEQEIRYLSGGNQQKAVIGRWMLAGSRVLIMDEPTRGVDVGAKVEIYELMNRLTEEGAGILMISSEMPEVLGMSDRVLVMSGGRITGELPAEEATQERVMGLATAGSEAAVG.

ABC transporter domains lie at 5 to 240 (LEMR…GRSI) and 249 to 494 (TEPG…TAGS). 37 to 44 (GENGAGKS) contacts ATP.

It belongs to the ABC transporter superfamily. Ribose importer (TC 3.A.1.2.1) family. The complex is composed of an ATP-binding protein (RbsA), two transmembrane proteins (RbsC) and a solute-binding protein (RbsB).

Its subcellular location is the cell membrane. The enzyme catalyses D-ribose(out) + ATP + H2O = D-ribose(in) + ADP + phosphate + H(+). Its function is as follows. Part of the ABC transporter complex RbsABC involved in ribose import. Responsible for energy coupling to the transport system. The protein is Ribose import ATP-binding protein RbsA 1 of Rubrobacter xylanophilus (strain DSM 9941 / JCM 11954 / NBRC 16129 / PRD-1).